The sequence spans 195 residues: GRF1-interacting factor 2 (195 aa).

Residues 166 to 195 (QQPETGLGGNVGLRGGKQDGADGQGKDDGK) are disordered. Over residues 171-180 (GLGGNVGLRG) the composition is skewed to gly residues. The span at 181–195 (GKQDGADGQGKDDGK) shows a compositional bias: basic and acidic residues.

Belongs to the SS18 family. Interacts with GRF1. Predominantly expressed in shoot tips containing the shoot apical meristem (SAM) and flower buds. Also expressed in mature flowers.

Functionally, transcription coactivator that plays a role in the regulation of cell expansion in leaf and cotyledons tissues. Component of a network formed by miR396, the GRFs and their interacting factors (GIFs) acting in the regulation of meristem function, at least partially through the control of cell proliferation. GIFs are involved in the positive regulation of cell proliferation of lateral organs in a functionally redundant manner. The protein is GRF1-interacting factor 2 (GIF2) of Arabidopsis thaliana (Mouse-ear cress).